The chain runs to 449 residues: uncharacterized protein (449 aa).

The TRAM domain maps to V3–E61. Residues C74, C80, C83, and C161 each coordinate [4Fe-4S] cluster. The S-adenosyl-L-methionine site is built by Q283, Y312, E333, and D378. C405 functions as the Nucleophile in the catalytic mechanism.

The protein belongs to the class I-like SAM-binding methyltransferase superfamily. RNA M5U methyltransferase family.

This is an uncharacterized protein from Thermosynechococcus vestitus (strain NIES-2133 / IAM M-273 / BP-1).